The following is a 1006-amino-acid chain: MAEQESLEFGKADFVLMDTVSMPEFMANLRLRFEKGRIYTFIGEVVVSVNPYKALNIYGRDTIEQYKGRELYERPPHLFAIADAAYKAMKRRSKDTCIVISGESGAGKTEASKYIMQYIAAITNPSQRAEVERVKNMLLKSNCVLEAFGNAKTNRNDNSSRFGKYMDINFDFKGDPIGGHINNYLLEKSRVIVQQPGERSFHSFYQLLQGGSEQMLRSLHLQKSLSSYNYIHVGAQLKSSINDAAEFKVVADAMKVIGFKPEETQTVYKILAAILHLGNLKFMVDGDTPLIENGKVVSIIAELLSTKTDMVEKALLYRTVATGRDIIDKQHTEQEASYGRDAFAKAIYERLFCWIVTRINDIIEVKNYDTTIHGKNTVIGVLDIYGFEIFDNNSFEQFCINYCNEKLQQLFIQLVLKQEQEEYQREGIPWKHIDYFNNQIIVDLVEQQHKGIIAILDDACMNVGKVTDEMFLEALNSKLGKHGHFSSRKLCASDKILEFDRDFRIRHYAGDVVYSVIGFIDKNKDTLFQDFKRLLYNSSNPVLKNMWPEGKLSITEVTKRPLTAATLFKNSMIALVDNLASKEPYYVRCIKPNDKKSPQIFDDERCRHQVEYLGLLENVRVRRAGFAFRQTYEKFLHRYKMISEFTWPNHDLPSDKEAVKKLIEHCGFQDDVAYGKTKIFIRTPRTLFTLEELRAQMLIRIVLFLQKVWRGTLARMRYKRTKAALTIIRYYRHYKVKSYIQEVARRFHGVKTMKDHGKHVKWPTPPKVLRRFEEALQAIFNRWRASQLIKSLPASDLPQVRAKVAAMEMLKGQRADLGLQRAWEGNYLASKPDTPQTSGTFVPVANELKRKDKYMNVLFSCHVRKVNRFSKVEDRAIFVTDRHLYKMDPTKQYKVMKTIPLYNLTGLSVSNGKDQLVVFHTKDNKDLIVCLFSKQPTHESRIGELVGVLVNHFKSEKRHLQVNVTNPVQCSLHGKKCTVSVETRLNQPEPDFTKNRSGFILSVPGN.

The residue at position 2 (Ala2) is an N-acetylalanine. A Myosin motor domain is found at Phe9–Ala695. Residue Gly102–Thr109 coordinates ATP. Position 200 is a phosphoserine (Ser200). Phosphotyrosine is present on Tyr536. Residues Met572–Asp594 are actin-binding. 2 IQ domains span residues Ile699 to Lys719 and Thr721 to Gln741. The TH1 domain maps to Gly812–Gly1005.

The protein belongs to the TRAFAC class myosin-kinesin ATPase superfamily. Myosin family. As to quaternary structure, interacts (via the two IQ motifs) with calmodulin. Binds an additional calmodulin chain via a third, C-terminal region. Interacts with F-actin.

The protein resides in the cytoplasm. It is found in the perikaryon. It localises to the cell projection. The protein localises to the dendrite. Its subcellular location is the early endosome. The protein resides in the cell cortex. In terms of biological role, unconventional myosin that functions as actin-based motor protein with ATPase activity. Plays a role in endosomal protein trafficking, and especially in the transfer of cargo proteins from early to recycling endosomes. Required for normal planar cell polarity in ciliated tracheal cells, for normal rotational polarity of cilia, and for coordinated, unidirectional ciliary movement in the trachea. Required for normal, polarized cilia organization in brain ependymal epithelial cells. This is Unconventional myosin-Id (MYO1D) from Canis lupus familiaris (Dog).